Consider the following 643-residue polypeptide: MKRFYGGLLVVSMCMFLTVYRYVDLNTPVEKPYITAAASVVVTPNTTLPMEWLRITLPDFMKEARNTQEAISGDDIAVVSGLFVEQNVSKEEREPLLTWNRLESLVDNAQSLVNGVDAIKEAGIVWESLVSAVEAKKLVDVNENQTRKGKEELCPQFLSKMNATEADGSSLKLQIPCGLTQGSSITVIGIPDGLVGSFRIDLTGQPLPGEPDPPIIVHYNVRLLGDKSTEDPVIVQNSWTASQDWGAEERCPKFDPDMNKKVDDLDECNKMVGGEINRTSSTSLQSNTSRGVPVAREASKHEKYFPFKQGFLSVATLRVGTEGMQMTVDGKHITSFAFRDTLEPWLVSEIRITGDFRLISILASGLPTSEESEHVVDLEALKSPTLSPLRPLDLVIGVFSTANNFKRRMAVRRTWMQYDDVRSGRVAVRFFVGLHKSPLVNLELWNEARTYGDVQLMPFVDYYSLISWKTLAICIFGTEVDSAKFIMKTDDDAFVRVDEVLLSLSMTNNTRGLIYGLINSDSQPIRNPDSKWYISYEEWPEEKYPPWAHGPGYIVSRDIAESVGKLFKEGNLKMFKLEDVAMGIWIAELTKHGLEPHYENDGRIISDGCKDGYVVAHYQSPAEMTCLWRKYQETKRSLCCREW.

Residues 1–6 (MKRFYG) lie on the Cytoplasmic side of the membrane. Residues 7 to 23 (GLLVVSMCMFLTVYRYV) form a helical; Signal-anchor for type II membrane protein membrane-spanning segment. Residues 24–643 (DLNTPVEKPY…TKRSLCCREW (620 aa)) lie on the Lumenal side of the membrane. N-linked (GlcNAc...) asparagine glycosylation is found at Asn45, Asn87, Asn144, Asn162, Asn277, Asn287, and Asn508. The region spanning 171-364 (LKLQIPCGLT…DFRLISILAS (194 aa)) is the Galectin domain.

This sequence belongs to the glycosyltransferase 31 family. As to quaternary structure, interacts with GMII. It depends on Mn(2+) as a cofactor. As to expression, expressed in stems and siliques.

It localises to the golgi apparatus membrane. The protein operates within protein modification; protein glycosylation. Functionally, beta-1,3-galactosyltransferase that transfers galactose from UDP-galactose to substrates with a terminal beta-N-acetylglucosamine (beta-GlcNAc) residue. Involved in the biosynthesis of N-glycans containing Lewis a structures (with the combination of FUT13). This is Beta-1,3-galactosyltransferase GALT1 from Arabidopsis thaliana (Mouse-ear cress).